Consider the following 285-residue polypeptide: Single myb histone 3 (285 aa).

Positions 1-35 (MGAPKQKWTSEEEDALRRGVRKHGAGKWRTIQKDP) are disordered. In terms of domain architecture, HTH myb-type spans 1–60 (MGAPKQKWTSEEEDALRRGVRKHGAGKWRTIQKDPQFSPILSSRSNIDLKDKWRNLSFSA). The H-T-H motif DNA-binding region spans 28–56 (WRTIQKDPQFSPILSSRSNIDLKDKWRNL). Residues 113–181 (TPPKYGAMIM…KVDNFYRLPD (69 aa)) enclose the H15 domain. A coiled-coil region spans residues 226–255 (VKVTDAEAKAHDAHDQMMEAERMLKMAEDT).

This sequence belongs to the histone H1/H5 family. SMH subfamily. Forms a homodimer and heterodimers.

The protein resides in the nucleus. Its subcellular location is the chromosome. The protein localises to the nucleolus. It localises to the telomere. Functionally, binds preferentially double-stranded telomeric repeats, but may also bind to the single telomeric strand. This Zea mays (Maize) protein is Single myb histone 3 (SMH3).